A 67-amino-acid chain; its full sequence is Medusin-S1 (67 aa).

Positions 1–22 (MSFLKKSLFLVLFLGFVSLSIC) are cleaved as a signal peptide. Positions 23–48 (EEEKRETEEKENEQEDDREERSEEKR) are excised as a propeptide. The interval 26 to 47 (KRETEEKENEQEDDREERSEEK) is disordered. A compositionally biased stretch (acidic residues) spans 31-40 (EKENEQEDDR). Leu66 is subject to Leucine amide.

It belongs to the frog skin active peptide (FSAP) family. Medusin subfamily. As to expression, expressed by the skin glands.

It localises to the secreted. The protein resides in the target cell membrane. Antibacterial peptide with moderate activity against the Gram-positive bacteria (S.aureus ATCC 25923, MIC=25 uM), but not against all other bacteria (both Gram-positive and Gram-negative) tested. Does not show activity against fungi, and against Leishmania species. It adopts an alpha-helical structure with very low amphipathicity in membrane environments. The protein is Medusin-S1 of Phyllomedusa sauvagei (Sauvage's leaf frog).